The primary structure comprises 281 residues: 2-dehydro-3-deoxyphosphooctonate aldolase (281 aa).

This sequence belongs to the KdsA family.

Its subcellular location is the cytoplasm. It carries out the reaction D-arabinose 5-phosphate + phosphoenolpyruvate + H2O = 3-deoxy-alpha-D-manno-2-octulosonate-8-phosphate + phosphate. Its pathway is carbohydrate biosynthesis; 3-deoxy-D-manno-octulosonate biosynthesis; 3-deoxy-D-manno-octulosonate from D-ribulose 5-phosphate: step 2/3. The protein operates within bacterial outer membrane biogenesis; lipopolysaccharide biosynthesis. The chain is 2-dehydro-3-deoxyphosphooctonate aldolase from Pseudomonas fluorescens (strain Pf0-1).